We begin with the raw amino-acid sequence, 471 residues long: Soluble pyridine nucleotide transhydrogenase (471 aa).

Position 41–50 (41–50 (EREPSVGGGC)) interacts with FAD.

It belongs to the class-I pyridine nucleotide-disulfide oxidoreductase family. FAD is required as a cofactor.

It localises to the cytoplasm. It carries out the reaction NAD(+) + NADPH = NADH + NADP(+). Functionally, conversion of NADPH, generated by peripheral catabolic pathways, to NADH, which can enter the respiratory chain for energy generation. The sequence is that of Soluble pyridine nucleotide transhydrogenase from Aliivibrio fischeri (strain ATCC 700601 / ES114) (Vibrio fischeri).